Here is a 251-residue protein sequence, read N- to C-terminus: Methionine aminopeptidase (251 aa).

A substrate-binding site is contributed by histidine 79. Residues aspartate 96, aspartate 107, and histidine 170 each contribute to the a divalent metal cation site. Position 177 (histidine 177) interacts with substrate. The a divalent metal cation site is built by glutamate 204 and glutamate 235.

It belongs to the peptidase M24A family. Methionine aminopeptidase type 1 subfamily. In terms of assembly, monomer. Co(2+) serves as cofactor. It depends on Zn(2+) as a cofactor. The cofactor is Mn(2+). Requires Fe(2+) as cofactor.

It catalyses the reaction Release of N-terminal amino acids, preferentially methionine, from peptides and arylamides.. In terms of biological role, removes the N-terminal methionine from nascent proteins. The N-terminal methionine is often cleaved when the second residue in the primary sequence is small and uncharged (Met-Ala-, Cys, Gly, Pro, Ser, Thr, or Val). Requires deformylation of the N(alpha)-formylated initiator methionine before it can be hydrolyzed. This is Methionine aminopeptidase from Borreliella burgdorferi (strain ATCC 35210 / DSM 4680 / CIP 102532 / B31) (Borrelia burgdorferi).